The chain runs to 68 residues: UPF0337 protein RB10934 (68 aa).

It belongs to the UPF0337 (CsbD) family.

The chain is UPF0337 protein RB10934 from Rhodopirellula baltica (strain DSM 10527 / NCIMB 13988 / SH1).